The primary structure comprises 177 residues: Bifunctional protein PyrR (177 aa).

The PRPP-binding motif lies at 99–111 (VILVDDVIYKGRT).

It belongs to the purine/pyrimidine phosphoribosyltransferase family. PyrR subfamily.

The enzyme catalyses UMP + diphosphate = 5-phospho-alpha-D-ribose 1-diphosphate + uracil. Regulates the transcription of the pyrimidine nucleotide (pyr) operon in response to exogenous pyrimidines. In terms of biological role, also displays a weak uracil phosphoribosyltransferase activity which is not physiologically significant. The chain is Bifunctional protein PyrR from Microcystis aeruginosa (strain NIES-843 / IAM M-2473).